The chain runs to 102 residues: Urease subunit beta (102 aa).

The protein belongs to the urease beta subunit family. As to quaternary structure, heterotrimer of UreA (gamma), UreB (beta) and UreC (alpha) subunits. Three heterotrimers associate to form the active enzyme.

It is found in the cytoplasm. It carries out the reaction urea + 2 H2O + H(+) = hydrogencarbonate + 2 NH4(+). It functions in the pathway nitrogen metabolism; urea degradation; CO(2) and NH(3) from urea (urease route): step 1/1. The chain is Urease subunit beta from Acinetobacter baumannii (strain AB307-0294).